The following is a 255-amino-acid chain: Ornithine decarboxylase antizyme (255 aa).

This sequence belongs to the ODC antizyme family. Interacts with ODC and thereby sterically blocks ODC homodimerization.

Its function is as follows. Ornithine decarboxylase (ODC) antizyme protein that negatively regulates ODC activity and intracellular polyamine biosynthesis in response to increased intracellular polyamine levels. Binds to ODC monomers, inhibiting the assembly of the functional ODC homodimer, and targets the monomers for ubiquitin-independent proteolytic destruction by the 26S proteasome. The protein is Ornithine decarboxylase antizyme (OAZ1) of Eremothecium gossypii (strain ATCC 10895 / CBS 109.51 / FGSC 9923 / NRRL Y-1056) (Yeast).